The chain runs to 234 residues: Short neuropeptide F (234 aa).

The N-terminal stretch at 1 to 22 (MYRINLTTFTLLLVLAVGSLMS) is a signal peptide. The propeptide occupies 23–56 (ESLHPSDGAINDLYEYLLQREYAAPVSYADHQIK). A phenylalanine amide mark is found at Phe-69 and Phe-101. Residue Trp-132 is modified to Tryptophan amide. Phe-165 carries the post-translational modification Phenylalanine amide. A compositionally biased stretch (polar residues) spans 181-190 (TTGQQAQPAN). Residues 181 to 234 (TTGQQAQPANEASEKRAPTQRLRWGRSDPALAKDSSEDKALDVEESENTNADDK) are disordered. The residue at position 204 (Trp-204) is a Tryptophan amide. A propeptide spanning residues 207-234 (SDPALAKDSSEDKALDVEESENTNADDK) is cleaved from the precursor.

This sequence belongs to the NPY family. Expressed in all body parts of larva, pupae and adults.

Its subcellular location is the secreted. Plays a role in controlling food intake and regulating body size. The polypeptide is Short neuropeptide F (Anopheles gambiae (African malaria mosquito)).